We begin with the raw amino-acid sequence, 611 residues long: MFS siderochrome iron transporter C (611 aa).

The disordered stretch occupies residues 1-25 (MPFLDHRTGPSYGTIDQMEQHSDDE). A glycan (N-linked (GlcNAc...) asparagine) is linked at N62. 14 helical membrane passes run 71–91 (VIAY…GQTV), 107–127 (LIST…PPMA), 136–156 (FEAF…MAAS), 165–185 (AQIF…VFIA), 194–214 (AFLA…GPTI), 228–248 (YGMW…SLLL), 282–302 (MGGL…LTLA), 313–333 (SIVA…FWES), 353–373 (ALAG…SVQP), 393–413 (VTQT…ILIK), 418–438 (YRAF…LMMV), 449–469 (ILVT…PVQL), 486–506 (MFLT…GAVW), and 560–580 (LLIL…AMED). The interval 592-611 (VDPVPAEEGEIEPNRHVKRT) is disordered.

Belongs to the major facilitator superfamily.

It localises to the membrane. In terms of biological role, major facilitator transporter that contributes to the maintenance of intracellular siderophore ferricrocin (FC) levels. Plays a role in conidiation and confers protection against oxidative stress. Also contributes to fungal virulence in the Galleria mellonella animal model system. Does not appear to play a role in either siderophore export or uptake. The protein is MFS siderochrome iron transporter C of Aspergillus fumigatus (strain ATCC MYA-4609 / CBS 101355 / FGSC A1100 / Af293) (Neosartorya fumigata).